Here is a 241-residue protein sequence, read N- to C-terminus: Chaperone protein HifB (241 aa).

Residues 1–27 (MGKTMFKKTLLFFTALFFAALCAFSAN) form the signal peptide.

Belongs to the periplasmic pilus chaperone family.

It localises to the periplasm. In terms of biological role, mediates assembly of pili by forming soluble multimeric complexes with pili subunits as an intermediate step in the assembly process. This protein is involved in type B pili (HifA) assembly. In Haemophilus influenzae, this protein is Chaperone protein HifB (hifB).